A 458-amino-acid polypeptide reads, in one-letter code: uncharacterized protein (458 aa).

The protein belongs to the MG032/MG096/MG288 family.

This is an uncharacterized protein from Mycoplasma pneumoniae (strain ATCC 29342 / M129 / Subtype 1) (Mycoplasmoides pneumoniae).